The sequence spans 382 residues: UDP-4-amino-4-deoxy-L-arabinose--oxoglutarate aminotransferase (382 aa).

Lysine 182 carries the N6-(pyridoxal phosphate)lysine modification.

This sequence belongs to the DegT/DnrJ/EryC1 family. ArnB subfamily. As to quaternary structure, homodimer. Pyridoxal 5'-phosphate serves as cofactor.

The catalysed reaction is UDP-4-amino-4-deoxy-beta-L-arabinose + 2-oxoglutarate = UDP-beta-L-threo-pentopyranos-4-ulose + L-glutamate. Its pathway is nucleotide-sugar biosynthesis; UDP-4-deoxy-4-formamido-beta-L-arabinose biosynthesis; UDP-4-deoxy-4-formamido-beta-L-arabinose from UDP-alpha-D-glucuronate: step 2/3. It participates in bacterial outer membrane biogenesis; lipopolysaccharide biosynthesis. In terms of biological role, catalyzes the conversion of UDP-4-keto-arabinose (UDP-Ara4O) to UDP-4-amino-4-deoxy-L-arabinose (UDP-L-Ara4N). The modified arabinose is attached to lipid A and is required for resistance to polymyxin and cationic antimicrobial peptides. This Pectobacterium atrosepticum (strain SCRI 1043 / ATCC BAA-672) (Erwinia carotovora subsp. atroseptica) protein is UDP-4-amino-4-deoxy-L-arabinose--oxoglutarate aminotransferase.